The sequence spans 225 residues: MLHIPSVLTSAQVIEIRQKLDAADWVDGKATVGAQGAQVKKNRQLPELSPVGMELGQIILKALVSNPLFFSAALPMRYMPPLFNRYEGGEHYGFHIDGSVRTIPGSNLSLRTDLSCTLFLCEPEDYDGGELIVSDTYGEHEVKLPAGDMILYPSSSLHKVEPVTRGARVCSFFWLQSMVADDGKRSLLFELDQNIQKLREKLGDCEEVVGLTGHYHNLLRQWAAV.

Residues 77–177 (RYMPPLFNRY…RVCSFFWLQS (101 aa)) form the Fe2OG dioxygenase domain. Fe cation contacts are provided by histidine 95, aspartate 97, and histidine 158. Arginine 168 is a 2-oxoglutarate binding site.

The cofactor is Fe(2+). It depends on L-ascorbate as a cofactor.

This is PKHD-type hydroxylase HEAR3399 from Herminiimonas arsenicoxydans.